The following is a 262-amino-acid chain: Imidazole glycerol phosphate synthase subunit HisF (262 aa).

Residues Asp11 and Asp130 contribute to the active site.

The protein belongs to the HisA/HisF family. Heterodimer of HisH and HisF.

It is found in the cytoplasm. It catalyses the reaction 5-[(5-phospho-1-deoxy-D-ribulos-1-ylimino)methylamino]-1-(5-phospho-beta-D-ribosyl)imidazole-4-carboxamide + L-glutamine = D-erythro-1-(imidazol-4-yl)glycerol 3-phosphate + 5-amino-1-(5-phospho-beta-D-ribosyl)imidazole-4-carboxamide + L-glutamate + H(+). Its pathway is amino-acid biosynthesis; L-histidine biosynthesis; L-histidine from 5-phospho-alpha-D-ribose 1-diphosphate: step 5/9. IGPS catalyzes the conversion of PRFAR and glutamine to IGP, AICAR and glutamate. The HisF subunit catalyzes the cyclization activity that produces IGP and AICAR from PRFAR using the ammonia provided by the HisH subunit. In Rhodopirellula baltica (strain DSM 10527 / NCIMB 13988 / SH1), this protein is Imidazole glycerol phosphate synthase subunit HisF.